The primary structure comprises 396 residues: Flavohemoprotein (396 aa).

The Globin domain maps to 1–136 (MLDAQTIATV…LANVFINREA (136 aa)). His-85 is a binding site for heme b. Catalysis depends on charge relay system residues Tyr-95 and Glu-135. A reductase region spans residues 147–396 (GGWEGTRDFR…YECFGPHKVL (250 aa)). In terms of domain architecture, FAD-binding FR-type spans 150–255 (EGTRDFRIVA…VAPAGDFFMA (106 aa)). FAD is bound by residues Tyr-188 and 204–207 (RQYS). Position 268–273 (268–273 (GVGQTP)) interacts with NADP(+). 389 to 392 (CFGP) contacts FAD.

This sequence belongs to the globin family. Two-domain flavohemoproteins subfamily. It in the C-terminal section; belongs to the flavoprotein pyridine nucleotide cytochrome reductase family. In terms of assembly, monomer. The cofactor is FAD. Heme b serves as cofactor.

Its subcellular location is the cytoplasm. It carries out the reaction 2 nitric oxide + NADPH + 2 O2 = 2 nitrate + NADP(+) + H(+). The enzyme catalyses 2 nitric oxide + NADH + 2 O2 = 2 nitrate + NAD(+) + H(+). In terms of biological role, is involved in NO detoxification in an aerobic process, termed nitric oxide dioxygenase (NOD) reaction that utilizes O(2) and NAD(P)H to convert NO to nitrate, which protects the bacterium from various noxious nitrogen compounds. Therefore, plays a central role in the inducible response to nitrosative stress. In the presence of oxygen and NADH, HMP has NADH oxidase activity, which leads to the generation of superoxide and H(2)O(2), both in vitro and in vivo, and it has been suggested that HMP might act as an amplifier of superoxide stress. Under anaerobic conditions, HMP also exhibits nitric oxide reductase and FAD reductase activities. However, all these reactions are much lower than NOD activity. Its function is as follows. Various electron acceptors are also reduced by HMP in vitro, including dihydropterine, ferrisiderophores, ferric citrate, cytochrome c, nitrite, S-nitrosoglutathione, and alkylhydroperoxides. However, it is unknown if these reactions are of any biological significance in vivo. The protein is Flavohemoprotein (hmp) of Escherichia coli (strain K12).